Here is a 474-residue protein sequence, read N- to C-terminus: Synaptotagmin 1 (474 aa).

Disordered stretches follow at residues 1–49 and 63–84; these read MPPN…DRQE and QRIA…ESTT. The Vesicular portion of the chain corresponds to 1 to 107; the sequence is MPPNAKSETD…EVVTEVIAER (107 aa). Over residues 30–49 the composition is skewed to basic and acidic residues; sequence VDQKLEETHHSKFREVDRQE. The span at 69–84 shows a compositional bias: low complexity; sequence ESTTRSATTEAQESTT. The chain crosses the membrane as a helical span at residues 108-134; the sequence is TGLPTWGVVAIIILVFLVVFGIIFFCV. Residues 135–474 lie on the Cytoplasmic side of the membrane; the sequence is RRFLKKRRTK…ETDEILKNMK (340 aa). A disordered region spans residues 170–189; that stretch reads PDMEELTENAEEGDEEDKQS. Residues 171-187 are compositionally biased toward acidic residues; sequence DMEELTENAEEGDEEDK. Positions 186–434 are phospholipid binding; the sequence is DKQSEQKLGR…PIGRCILGCM (249 aa). 2 C2 domains span residues 192-312 and 325-458; these read KLGR…EEWR and KLGD…AQWH. Residues leucine 222, aspartate 223, aspartate 229, aspartate 282, phenylalanine 283, aspartate 284, serine 287, lysine 288, aspartate 290, aspartate 356, aspartate 362, aspartate 416, and aspartate 418 each coordinate Ca(2+).

This sequence belongs to the synaptotagmin family. As to quaternary structure, homodimer or homotrimer (Potential). Identified in a complex with Syn and nwk. Interacts with StnA and StnB via its second C2 domain. This interaction may mediate its retrieval from the plasma membrane, thereby facilitating the internalization of multiple synaptic vesicles from the plasma membrane. Requires Ca(2+) as cofactor.

It localises to the cytoplasmic vesicle. The protein resides in the secretory vesicle. The protein localises to the synaptic vesicle membrane. Its subcellular location is the synapse. In terms of biological role, may have a regulatory role in the membrane interactions during trafficking of synaptic vesicles at the active zone of the synapse. It binds acidic phospholipids with a specificity that requires the presence of both an acidic head group and a diacyl backbone. The protein is Synaptotagmin 1 (Syt1) of Drosophila melanogaster (Fruit fly).